The primary structure comprises 66 residues: Large ribosomal subunit protein bL35 (66 aa).

2 stretches are compositionally biased toward basic residues: residues 1–26 (MPKM…KRSH) and 38–48 (QKQKRKLRKSA). Residues 1–48 (MPKMKTHKGAAKRFKKTGSGKLKRSHAFTSHLFANKSQKQKRKLRKSA) are disordered.

This sequence belongs to the bacterial ribosomal protein bL35 family.

The sequence is that of Large ribosomal subunit protein bL35 from Halalkalibacterium halodurans (strain ATCC BAA-125 / DSM 18197 / FERM 7344 / JCM 9153 / C-125) (Bacillus halodurans).